Here is a 218-residue protein sequence, read N- to C-terminus: Phosphoribosylformylglycinamidine synthase subunit PurQ (218 aa).

In terms of domain architecture, Glutamine amidotransferase type-1 spans 2 to 218 (TIGIVVFPGS…IKILQALLSN (217 aa)). The active-site Nucleophile is Cys86. Catalysis depends on residues His194 and Glu196.

As to quaternary structure, part of the FGAM synthase complex composed of 1 PurL, 1 PurQ and 2 PurS subunits.

The protein resides in the cytoplasm. The catalysed reaction is N(2)-formyl-N(1)-(5-phospho-beta-D-ribosyl)glycinamide + L-glutamine + ATP + H2O = 2-formamido-N(1)-(5-O-phospho-beta-D-ribosyl)acetamidine + L-glutamate + ADP + phosphate + H(+). The enzyme catalyses L-glutamine + H2O = L-glutamate + NH4(+). The protein operates within purine metabolism; IMP biosynthesis via de novo pathway; 5-amino-1-(5-phospho-D-ribosyl)imidazole from N(2)-formyl-N(1)-(5-phospho-D-ribosyl)glycinamide: step 1/2. Part of the phosphoribosylformylglycinamidine synthase complex involved in the purines biosynthetic pathway. Catalyzes the ATP-dependent conversion of formylglycinamide ribonucleotide (FGAR) and glutamine to yield formylglycinamidine ribonucleotide (FGAM) and glutamate. The FGAM synthase complex is composed of three subunits. PurQ produces an ammonia molecule by converting glutamine to glutamate. PurL transfers the ammonia molecule to FGAR to form FGAM in an ATP-dependent manner. PurS interacts with PurQ and PurL and is thought to assist in the transfer of the ammonia molecule from PurQ to PurL. The sequence is that of Phosphoribosylformylglycinamidine synthase subunit PurQ from Prochlorococcus marinus (strain SARG / CCMP1375 / SS120).